The following is an 80-amino-acid chain: RNA-binding protein Hfq (80 aa).

The Sm domain maps to 10–69 (DPFLNVLRKEHIPVSIYLVNGIKLQGHIDSFDQYVVLLRNSVTQMVYKHAISTIVPGKAV).

The protein belongs to the Hfq family. As to quaternary structure, homohexamer.

RNA chaperone that binds small regulatory RNA (sRNAs) and mRNAs to facilitate mRNA translational regulation in response to envelope stress, environmental stress and changes in metabolite concentrations. Also binds with high specificity to tRNAs. The chain is RNA-binding protein Hfq from Nitrosomonas eutropha (strain DSM 101675 / C91 / Nm57).